The following is a 1001-amino-acid chain: Serine/threonine-protein kinase TAO1 (1001 aa).

Ser-9 is modified (phosphoserine). The Protein kinase domain occupies 28–281 (FTDLREIGHG…SEELLKHIFV (254 aa)). Residues 34–42 (IGHGSFGAV) and Lys-57 each bind ATP. Asp-151 functions as the Proton acceptor in the catalytic mechanism. The tract at residues 324 to 433 (PAVEAQEEEE…QVSRHKSHYR (110 aa)) is disordered. The span at 350–373 (SNQSIPSMSISASSQSSSVNSLPD) shows a compositional bias: low complexity. Composition is skewed to basic and acidic residues over residues 375-388 (SDDKSELDMMEGDH) and 399-416 (LKPEEENYREEGDPRTRA). Phosphoserine is present on residues Ser-421 and Ser-445. The stretch at 458 to 651 (SELREQMSGY…QTQKDLEHAM (194 aa)) forms a coiled coil. The segment at 567 to 587 (KEELNENQSTPKKEKQEWLSK) is disordered. The span at 577–587 (PKKEKQEWLSK) shows a compositional bias: basic and acidic residues. Thr-669 is subject to Phosphothreonine. Positions 754-877 (KAVLKRLKEE…LERQAREIEA (124 aa)) form a coiled coil. A disordered region spans residues 911 to 1001 (SHNPTGGPGP…ISNGSHMSYT (91 aa)). Ser-965 carries the phosphoserine modification. Over residues 975–1001 (GGRTEQGMSRSTSVTSQISNGSHMSYT) the composition is skewed to polar residues.

It belongs to the protein kinase superfamily. STE Ser/Thr protein kinase family. STE20 subfamily. As to quaternary structure, self-associates. Interacts with MAP2K3. Interacts with SPRED1. Interacts with TESK1; the interaction inhibits TAOK1 kinase activity. Interacts with MAP3K7. Proteolytically processed by caspase-3 (CASP3). Post-translationally, autophosphorylated. Phosphorylated by ATM in response to DNA damage. Phosphorylated by LRRK2. As to expression, highly expressed in the testis, and to a lower extent also expressed in brain, placenta, colon and skeletal muscle.

The protein resides in the cytoplasm. It catalyses the reaction L-seryl-[protein] + ATP = O-phospho-L-seryl-[protein] + ADP + H(+). The catalysed reaction is L-threonyl-[protein] + ATP = O-phospho-L-threonyl-[protein] + ADP + H(+). With respect to regulation, serine/threonine-protein kinase activity is inhibited by SPRED1. In terms of biological role, serine/threonine-protein kinase involved in various processes such as p38/MAPK14 stress-activated MAPK cascade, DNA damage response and regulation of cytoskeleton stability. Phosphorylates MAP2K3, MAP2K6 and MARK2. Acts as an activator of the p38/MAPK14 stress-activated MAPK cascade by mediating phosphorylation and subsequent activation of the upstream MAP2K3 and MAP2K6 kinases. Involved in G-protein coupled receptor signaling to p38/MAPK14. In response to DNA damage, involved in the G2/M transition DNA damage checkpoint by activating the p38/MAPK14 stress-activated MAPK cascade, probably by mediating phosphorylation of MAP2K3 and MAP2K6. Acts as a regulator of cytoskeleton stability by phosphorylating 'Thr-208' of MARK2, leading to activate MARK2 kinase activity and subsequent phosphorylation and detachment of MAPT/TAU from microtubules. Also acts as a regulator of apoptosis: regulates apoptotic morphological changes, including cell contraction, membrane blebbing and apoptotic bodies formation via activation of the MAPK8/JNK cascade. Plays an essential role in the regulation of neuronal development in the central nervous system. Also plays a role in the regulation of neuronal migration to the cortical plate. This chain is Serine/threonine-protein kinase TAO1 (TAOK1), found in Homo sapiens (Human).